A 119-amino-acid chain; its full sequence is Ribosome-binding factor A (119 aa).

This sequence belongs to the RbfA family. In terms of assembly, monomer. Binds 30S ribosomal subunits, but not 50S ribosomal subunits or 70S ribosomes.

It localises to the cytoplasm. Functionally, one of several proteins that assist in the late maturation steps of the functional core of the 30S ribosomal subunit. Associates with free 30S ribosomal subunits (but not with 30S subunits that are part of 70S ribosomes or polysomes). Required for efficient processing of 16S rRNA. May interact with the 5'-terminal helix region of 16S rRNA. This Chlorobium luteolum (strain DSM 273 / BCRC 81028 / 2530) (Pelodictyon luteolum) protein is Ribosome-binding factor A.